A 757-amino-acid chain; its full sequence is RNA cytosine C(5)-methyltransferase NSUN2 (757 aa).

Positions 1–35 are disordered; sequence MGRRARGRRFQQPPQPEGEEDASDGGRKRGQAGWE. Serine 23 bears the Phosphoserine mark. Lysine 46 is covalently cross-linked (Glycyl lysine isopeptide (Lys-Gly) (interchain with G-Cter in SUMO2)). At serine 139 the chain carries Phosphoserine; by AURKB. S-adenosyl-L-methionine-binding positions include 184 to 190, aspartate 215, aspartate 242, and aspartate 268; that span reads CAAPGSK. Cysteine 321 functions as the Nucleophile in the catalytic mechanism. Residues 436–504 are disordered; sequence NKRQPKVQNK…EKKDGVCGPP (69 aa). Phosphoserine occurs at positions 456 and 473. Residues 463–476 show a composition bias toward polar residues; that stretch reads GNPSDQSELESQMI. Residues lysine 510 and lysine 515 each participate in a glycyl lysine isopeptide (Lys-Gly) (interchain with G-Cter in SUMO2) cross-link. The residue at position 585 (lysine 585) is an N6-acetyllysine; alternate. Lysine 585 carries the N6-malonyllysine; alternate modification. Residue lysine 585 forms a Glycyl lysine isopeptide (Lys-Gly) (interchain with G-Cter in SUMO2); alternate linkage. The residue at position 592 (serine 592) is a Phosphoserine. Glycyl lysine isopeptide (Lys-Gly) (interchain with G-Cter in SUMO2) cross-links involve residues lysine 639, lysine 653, and lysine 659. A disordered region spans residues 716–757; sequence LTNENAASPEQPGDEDAKQTAQDPCVPDSVPGCDAAAAEPSR. A Phosphothreonine modification is found at threonine 717. At serine 723 the chain carries Phosphoserine.

Belongs to the class I-like SAM-binding methyltransferase superfamily. RsmB/NOP family. TRM4 subfamily. Interacts with NPM1 and NCL during interphase; interaction is disrupted following phosphorylation at Ser-139. Phosphorylated at Ser-139 by AURKB during mitosis, leading to abolish methyltransferase activity and the interaction with NPM1. Ubiquitously expressed at low level. Up-regulated in tumors. Dynamically expressed during morphogenesis and in adult skin: in adult skin, expression is up-regulated in the bulge and hair germ as soon as the hair follicle enters its growing phase (anagen). During anagen, expressed at highest level in cells of the hair germ that give rise to the hair matrix.

The protein resides in the nucleus. It localises to the nucleolus. It is found in the cytoplasm. Its subcellular location is the mitochondrion. The protein localises to the cytoskeleton. The protein resides in the spindle. It localises to the secreted. It is found in the extracellular exosome. The catalysed reaction is cytidine(48) in tRNA + S-adenosyl-L-methionine = 5-methylcytidine(48) in tRNA + S-adenosyl-L-homocysteine + H(+). It carries out the reaction cytidine(49) in tRNA + S-adenosyl-L-methionine = 5-methylcytidine(49) in tRNA + S-adenosyl-L-homocysteine + H(+). It catalyses the reaction cytidine(50) in tRNA + S-adenosyl-L-methionine = 5-methylcytidine(50) in tRNA + S-adenosyl-L-homocysteine + H(+). The enzyme catalyses cytidine(34) in tRNA precursor + S-adenosyl-L-methionine = 5-methylcytidine(34) in tRNA precursor + S-adenosyl-L-homocysteine + H(+). The catalysed reaction is a cytidine in mRNA + S-adenosyl-L-methionine = a 5-methylcytidine in mRNA + S-adenosyl-L-homocysteine + H(+). Its activity is regulated as follows. Inhibited by magnesium ions. Its function is as follows. RNA cytosine C(5)-methyltransferase that methylates cytosine to 5-methylcytosine (m5C) in various RNAs, such as tRNAs, mRNAs and some long non-coding RNAs (lncRNAs). Involved in various processes, such as epidermal stem cell differentiation, testis differentiation and maternal to zygotic transition during early development: acts by increasing protein synthesis; cytosine C(5)-methylation promoting tRNA stability and preventing mRNA decay. Methylates cytosine to 5-methylcytosine (m5C) at positions 34 and 48 of intron-containing tRNA(Leu)(CAA) precursors, and at positions 48, 49 and 50 of tRNA(Gly)(GCC) precursors. tRNA methylation is required generation of RNA fragments derived from tRNAs (tRFs). Also mediates C(5)-methylation of mitochondrial tRNAs. Catalyzes cytosine C(5)-methylation of mRNAs, leading to stabilize them and prevent mRNA decay: mRNA stabilization involves YBX1 that specifically recognizes and binds m5C-modified transcripts. Cytosine C(5)-methylation of mRNAs also regulates mRNA export: methylated transcripts are specifically recognized by THOC4/ALYREF, which mediates mRNA nucleo-cytoplasmic shuttling. Also mediates cytosine C(5)-methylation of non-coding RNAs, such as vault RNAs (vtRNAs), promoting their processing into regulatory small RNAs. Cytosine C(5)-methylation of vtRNA VTRNA1.1 promotes its processing into small-vault RNA4 (svRNA4) and regulates epidermal differentiation. May act downstream of Myc to regulate epidermal cell growth and proliferation. Required for proper spindle assembly and chromosome segregation, independently of its methyltransferase activity. The protein is RNA cytosine C(5)-methyltransferase NSUN2 of Mus musculus (Mouse).